A 763-amino-acid chain; its full sequence is Endothelin-converting enzyme 2 (763 aa).

Residues 1–60 (MNVALHELGGGGSMVEYKRAKLRDEESPEITVEGRATRDSLEVGFQKRTRQLFGSHTQLE) are Cytoplasmic-facing. Serine 27 is subject to Phosphoserine. Residues 61–81 (LVLAGLILVLAALLLGCLVAL) traverse the membrane as a helical; Signal-anchor for type II membrane protein segment. Residues 82 to 763 (WVHRDPAHST…MNPGQLCEVW (682 aa)) are Lumenal-facing. In terms of domain architecture, Peptidase M13 spans 91–763 (TCVTEACIRV…MNPGQLCEVW (673 aa)). 5 disulfide bridges follow: cysteine 92/cysteine 97, cysteine 115/cysteine 748, cysteine 123/cysteine 708, cysteine 179/cysteine 428, and cysteine 637/cysteine 760. N-linked (GlcNAc...) asparagine glycans are attached at residues asparagine 159, asparagine 163, asparagine 204, asparagine 264, asparagine 309, asparagine 376, and asparagine 532. Histidine 600 is a binding site for Zn(2+). Residue glutamate 601 is part of the active site. Histidine 604 lines the Zn(2+) pocket. N-linked (GlcNAc...) asparagine glycosylation is found at asparagine 625 and asparagine 633. Glutamate 660 is a binding site for Zn(2+). The active-site Proton donor is the aspartate 664.

It belongs to the peptidase M13 family. Requires Zn(2+) as cofactor.

Its subcellular location is the golgi apparatus membrane. The protein resides in the cytoplasmic vesicle. It is found in the secretory vesicle membrane. The enzyme catalyses Hydrolysis of the 21-Trp-|-Val-22 bond in big endothelin to form endothelin 1.. In terms of biological role, converts big endothelin-1 to endothelin-1. Also involved in the processing of various neuroendocrine peptides, including neurotensin, angiotensin I, substance P, proenkephalin-derived peptides, and prodynorphin-derived peptides. May play a role in amyloid-beta processing. The protein is Endothelin-converting enzyme 2 of Mus musculus (Mouse).